We begin with the raw amino-acid sequence, 1373 residues long: DNA-directed RNA polymerase subunit beta (1373 aa).

The protein belongs to the RNA polymerase beta chain family. In terms of assembly, the RNAP catalytic core consists of 2 alpha, 1 beta, 1 beta' and 1 omega subunit. When a sigma factor is associated with the core the holoenzyme is formed, which can initiate transcription.

It catalyses the reaction RNA(n) + a ribonucleoside 5'-triphosphate = RNA(n+1) + diphosphate. Its function is as follows. DNA-dependent RNA polymerase catalyzes the transcription of DNA into RNA using the four ribonucleoside triphosphates as substrates. The sequence is that of DNA-directed RNA polymerase subunit beta from Rickettsia massiliae.